A 215-amino-acid polypeptide reads, in one-letter code: Pyridoxine/pyridoxamine 5'-phosphate oxidase (215 aa).

Substrate is bound by residues Arg9 to Tyr12 and Lys69. Residues Arg64–Lys69, Phe79–Ser80, Lys86, and Gln108 each bind FMN. Residues Tyr126, Arg130, and Ser134 each coordinate substrate. Residues Gln143 to Ser144 and Trp188 each bind FMN. Residue Arg194–His196 coordinates substrate. FMN is bound at residue Arg198.

This sequence belongs to the pyridoxamine 5'-phosphate oxidase family. Homodimer. It depends on FMN as a cofactor.

It carries out the reaction pyridoxamine 5'-phosphate + O2 + H2O = pyridoxal 5'-phosphate + H2O2 + NH4(+). The catalysed reaction is pyridoxine 5'-phosphate + O2 = pyridoxal 5'-phosphate + H2O2. It participates in cofactor metabolism; pyridoxal 5'-phosphate salvage; pyridoxal 5'-phosphate from pyridoxamine 5'-phosphate: step 1/1. The protein operates within cofactor metabolism; pyridoxal 5'-phosphate salvage; pyridoxal 5'-phosphate from pyridoxine 5'-phosphate: step 1/1. In terms of biological role, catalyzes the oxidation of either pyridoxine 5'-phosphate (PNP) or pyridoxamine 5'-phosphate (PMP) into pyridoxal 5'-phosphate (PLP). In Azotobacter vinelandii (strain DJ / ATCC BAA-1303), this protein is Pyridoxine/pyridoxamine 5'-phosphate oxidase.